The following is a 255-amino-acid chain: 5'-nucleotidase SurE (255 aa).

A divalent metal cation-binding residues include Asp-16, Asp-17, Ser-47, and Asn-100.

This sequence belongs to the SurE nucleotidase family. It depends on a divalent metal cation as a cofactor.

The protein localises to the cytoplasm. The catalysed reaction is a ribonucleoside 5'-phosphate + H2O = a ribonucleoside + phosphate. Nucleotidase that shows phosphatase activity on nucleoside 5'-monophosphates. The protein is 5'-nucleotidase SurE of Vibrio vulnificus (strain YJ016).